The sequence spans 235 residues: Probable queuosine precursor transporter (235 aa).

6 helical membrane-spanning segments follow: residues 17–37, 56–76, 87–107, 127–147, 155–175, and 201–221; these read IIWLSFFHIFIIAASNYFVQI, FHSTWGTLTFPFIFLATDLTV, IIFVVMFPALIVSYVISVLFS, IAIASFAAYVVGQLLDVIVFN, WWVAPTSSMTFGSMADTFVFF, and FKLFIGIILFVPAYGVVLNVI.

The protein belongs to the vitamin uptake transporter (VUT/ECF) (TC 2.A.88) family. Q precursor transporter subfamily.

The protein localises to the cell inner membrane. Its function is as follows. Involved in the import of queuosine (Q) precursors, required for Q precursor salvage. This is Probable queuosine precursor transporter from Haemophilus influenzae (strain ATCC 51907 / DSM 11121 / KW20 / Rd).